Reading from the N-terminus, the 72-residue chain is Prokaryotic ubiquitin-like protein Pup (72 aa).

Positions 1–10 (MATRDSGGGQ) are enriched in gly residues. The segment at 1-41 (MATRDSGGGQQRADRRAEEIDDVATEDTSASDLKERHEKLS) is disordered. A coiled-coil region spans residues 27–61 (DTSASDLKERHEKLSEDVDSLLDEIDDVLEENAEE). Residues 28 to 66 (TSASDLKERHEKLSEDVDSLLDEIDDVLEENAEEFVKGY) are ARC ATPase binding. Residues 32-41 (DLKERHEKLS) are compositionally biased toward basic and acidic residues. At Gln72 the chain carries Deamidated glutamine. An Isoglutamyl lysine isopeptide (Gln-Lys) (interchain with K-? in acceptor proteins) cross-link involves residue Gln72.

Belongs to the prokaryotic ubiquitin-like protein family. In terms of assembly, strongly interacts with the proteasome-associated ATPase ARC through a hydrophobic interface; the interacting region of Pup lies in its C-terminal half. There is one Pup binding site per ARC hexamer ring. In terms of processing, is modified by deamidation of its C-terminal glutamine to glutamate by the deamidase Dop, a prerequisite to the subsequent pupylation process.

It functions in the pathway protein degradation; proteasomal Pup-dependent pathway. Protein modifier that is covalently attached to lysine residues of substrate proteins, thereby targeting them for proteasomal degradation. The tagging system is termed pupylation. This Frankia casuarinae (strain DSM 45818 / CECT 9043 / HFP020203 / CcI3) protein is Prokaryotic ubiquitin-like protein Pup.